Consider the following 102-residue polypeptide: Iron-sulfur cluster assembly protein CyaY (102 aa).

This sequence belongs to the frataxin family.

In terms of biological role, involved in iron-sulfur (Fe-S) cluster assembly. May act as a regulator of Fe-S biogenesis. The sequence is that of Iron-sulfur cluster assembly protein CyaY from Mannheimia succiniciproducens (strain KCTC 0769BP / MBEL55E).